Reading from the N-terminus, the 515-residue chain is Cytoplasmic tRNA 2-thiolation protein 2 (515 aa).

2 disordered regions span residues 1-24 (MCQVGEDYGEPAPEEPPPAPRPSR) and 188-217 (LGAGGGPGPTQGEEQPPQPPLDPQNLARPP). Cysteine 2 is subject to N-acetylcysteine. A phosphoserine mark is found at serine 415, serine 419, serine 435, and serine 508.

Belongs to the CTU2/NCS2 family. In terms of assembly, component of a complex at least composed of URM1, CTU2/NCS2 and CTU1/ATPBD3.

It is found in the cytoplasm. Its pathway is tRNA modification; 5-methoxycarbonylmethyl-2-thiouridine-tRNA biosynthesis. Plays a central role in 2-thiolation of mcm(5)S(2)U at tRNA wobble positions of tRNA(Lys), tRNA(Glu) and tRNA(Gln). May act by forming a heterodimer with CTU1/ATPBD3 that ligates sulfur from thiocarboxylated URM1 onto the uridine of tRNAs at wobble position. This Homo sapiens (Human) protein is Cytoplasmic tRNA 2-thiolation protein 2.